The following is a 168-amino-acid chain: Protein GrpE (168 aa).

The protein belongs to the GrpE family. As to quaternary structure, homodimer.

It localises to the cytoplasm. Its function is as follows. Participates actively in the response to hyperosmotic and heat shock by preventing the aggregation of stress-denatured proteins, in association with DnaK and GrpE. It is the nucleotide exchange factor for DnaK and may function as a thermosensor. Unfolded proteins bind initially to DnaJ; upon interaction with the DnaJ-bound protein, DnaK hydrolyzes its bound ATP, resulting in the formation of a stable complex. GrpE releases ADP from DnaK; ATP binding to DnaK triggers the release of the substrate protein, thus completing the reaction cycle. Several rounds of ATP-dependent interactions between DnaJ, DnaK and GrpE are required for fully efficient folding. In Thermotoga neapolitana (strain ATCC 49049 / DSM 4359 / NBRC 107923 / NS-E), this protein is Protein GrpE.